The chain runs to 562 residues: Arginine--tRNA ligase (562 aa).

A 'HIGH' region motif is present at residues 136-146 (ANPTGPMHMGN).

This sequence belongs to the class-I aminoacyl-tRNA synthetase family. Monomer.

The protein localises to the cytoplasm. The enzyme catalyses tRNA(Arg) + L-arginine + ATP = L-arginyl-tRNA(Arg) + AMP + diphosphate. This is Arginine--tRNA ligase (argS) from Caldanaerobacter subterraneus subsp. tengcongensis (strain DSM 15242 / JCM 11007 / NBRC 100824 / MB4) (Thermoanaerobacter tengcongensis).